The following is a 341-amino-acid chain: MKAEYGEIKDNYGEIRLFPESIDDLWHLQHLVSPGDLVFATTFRSVEGATDKIRPEKVEKRPVRLGVRVEKVEFSHHGVRLRISGIIEHGMDTGAYHTINVETGYEISVIRRWRPVDLERLDRAVKASVYGVIHILTLEEGEAELFRLRQYGPESVITITAGSGKGGETETRTGFFDTVIKSIAEVSGPMVIAGPGFVKEDFVRYAKNKNCAPAGRAIVAETRRIGRGAVQDVIGAGTLEKLIGDLQLSREVRLMDEVLLRISRDGAIAYGYKDVATAIEYGAVDEVLLADSLLRDRAIVPLIESAERMQAKIIVLSTEFEPGERLAALGGIAALLRYKMG.

Belongs to the eukaryotic release factor 1 family. Pelota subfamily. Monomer. It depends on a divalent metal cation as a cofactor.

Its subcellular location is the cytoplasm. Its function is as follows. May function in recognizing stalled ribosomes, interact with stem-loop structures in stalled mRNA molecules, and effect endonucleolytic cleavage of the mRNA. May play a role in the release non-functional ribosomes and degradation of damaged mRNAs. Has endoribonuclease activity. The protein is Protein pelota homolog of Methanoregula boonei (strain DSM 21154 / JCM 14090 / 6A8).